The chain runs to 419 residues: Gamma-glutamyl phosphate reductase (419 aa).

The protein belongs to the gamma-glutamyl phosphate reductase family.

It is found in the cytoplasm. It carries out the reaction L-glutamate 5-semialdehyde + phosphate + NADP(+) = L-glutamyl 5-phosphate + NADPH + H(+). It functions in the pathway amino-acid biosynthesis; L-proline biosynthesis; L-glutamate 5-semialdehyde from L-glutamate: step 2/2. Catalyzes the NADPH-dependent reduction of L-glutamate 5-phosphate into L-glutamate 5-semialdehyde and phosphate. The product spontaneously undergoes cyclization to form 1-pyrroline-5-carboxylate. This Nitratidesulfovibrio vulgaris (strain DP4) (Desulfovibrio vulgaris) protein is Gamma-glutamyl phosphate reductase.